A 255-amino-acid polypeptide reads, in one-letter code: MALAKRIIPCLDVKDGRVVKGVNFIGLRDAGDPVEAAKRYNGEGADELTFLDITASSDNRDTILHIIEEVAGQVFIPLTVGGGVRTVADIRRLLNAGADKVSINTAAVTRPDLINEAAGFFGSQAIVAAVDAKAVNPENTRWEIFTHGGRNPTGLDAVEWAVEMQKRGAGEILLTGMDRDGTKQGFNLPLTRAVAEAVDIPVIASGGVGNVRHLIEGITEGKADAVLAAGIFHFGEIAIREAKRAMREAGIEVRL.

Catalysis depends on residues aspartate 12 and aspartate 131.

The protein belongs to the HisA/HisF family. As to quaternary structure, heterodimer of HisH and HisF.

The protein localises to the cytoplasm. The enzyme catalyses 5-[(5-phospho-1-deoxy-D-ribulos-1-ylimino)methylamino]-1-(5-phospho-beta-D-ribosyl)imidazole-4-carboxamide + L-glutamine = D-erythro-1-(imidazol-4-yl)glycerol 3-phosphate + 5-amino-1-(5-phospho-beta-D-ribosyl)imidazole-4-carboxamide + L-glutamate + H(+). The protein operates within amino-acid biosynthesis; L-histidine biosynthesis; L-histidine from 5-phospho-alpha-D-ribose 1-diphosphate: step 5/9. Its function is as follows. IGPS catalyzes the conversion of PRFAR and glutamine to IGP, AICAR and glutamate. The HisF subunit catalyzes the cyclization activity that produces IGP and AICAR from PRFAR using the ammonia provided by the HisH subunit. In Neisseria meningitidis serogroup C (strain 053442), this protein is Imidazole glycerol phosphate synthase subunit HisF.